The primary structure comprises 309 residues: Olfactory receptor 6C4 (309 aa).

The Extracellular segment spans residues 1–23; that stretch reads MKNRTMFGEFILLGLTNQPELQV. The N-linked (GlcNAc...) asparagine glycan is linked to Asn-3. The helical transmembrane segment at 24 to 44 threads the bilayer; that stretch reads MIFIFLFLTYMLSILGNLTII. The Cytoplasmic portion of the chain corresponds to 45–52; that stretch reads TLTLLDPH. A helical transmembrane segment spans residues 53 to 73; that stretch reads LQTPMYFFLRNFSFLEISFTS. The Extracellular segment spans residues 74–97; it reads IFIPRFLTSMTTGNKVISFAGCLT. Cys-95 and Cys-187 are oxidised to a cystine. The chain crosses the membrane as a helical span at residues 98 to 118; the sequence is QYFFAIFLGATEFYLLASMSY. Over 119 to 137 the chain is Cytoplasmic; that stretch reads DRYVAICKPLHYLTIMSSR. Residues 138-158 traverse the membrane as a helical segment; the sequence is VCIQLVFCSWLGGFLAILPPI. The Extracellular segment spans residues 159 to 195; sequence ILMTQVDFCVSNILNHYYCDYGPLVELACSDTSLLEL. The chain crosses the membrane as a helical span at residues 196–215; it reads MVILLAVVTLMVTLVLVTLS. At 216-235 the chain is on the cytoplasmic side; that stretch reads YTYIIRTILRIPSAQQRTKA. The helical transmembrane segment at 236 to 256 threads the bilayer; that stretch reads FSTCSSHMIVISLSYGSCMFM. At 257 to 269 the chain is on the extracellular side; it reads YINPSAKEGGAFN. The helical transmembrane segment at 270-290 threads the bilayer; sequence KGIAVLITSVTPLLNPFIYTL. Over 291–309 the chain is Cytoplasmic; it reads RNQQVKQAFKDSVKKIVKL.

Belongs to the G-protein coupled receptor 1 family.

The protein resides in the cell membrane. In terms of biological role, odorant receptor. The chain is Olfactory receptor 6C4 (OR6C4) from Homo sapiens (Human).